The following is a 320-amino-acid chain: ATP-dependent 6-phosphofructokinase (320 aa).

ATP contacts are provided by residues glycine 11, 72-73 (RY), and 102-105 (GDGS). Position 103 (aspartate 103) interacts with Mg(2+). Substrate is bound by residues 125 to 127 (TID), arginine 162, 169 to 171 (MGR), glutamate 222, arginine 243, and 249 to 252 (HMQR). The active-site Proton acceptor is the aspartate 127.

It belongs to the phosphofructokinase type A (PFKA) family. ATP-dependent PFK group I subfamily. Prokaryotic clade 'B1' sub-subfamily. Homotetramer. Mg(2+) is required as a cofactor.

It localises to the cytoplasm. It carries out the reaction beta-D-fructose 6-phosphate + ATP = beta-D-fructose 1,6-bisphosphate + ADP + H(+). Its pathway is carbohydrate degradation; glycolysis; D-glyceraldehyde 3-phosphate and glycerone phosphate from D-glucose: step 3/4. With respect to regulation, allosterically activated by ADP and other diphosphonucleosides, and allosterically inhibited by phosphoenolpyruvate. Functionally, catalyzes the phosphorylation of D-fructose 6-phosphate to fructose 1,6-bisphosphate by ATP, the first committing step of glycolysis. The sequence is that of ATP-dependent 6-phosphofructokinase from Lactiplantibacillus plantarum (strain ATCC BAA-793 / NCIMB 8826 / WCFS1) (Lactobacillus plantarum).